We begin with the raw amino-acid sequence, 76 residues long: uncharacterized protein (76 aa).

The helical transmembrane segment at 24 to 44 (GAIFLVCYPLYCVVCFVSVLC) threads the bilayer.

The protein localises to the membrane. This is an uncharacterized protein from Schizosaccharomyces pombe (strain 972 / ATCC 24843) (Fission yeast).